Consider the following 321-residue polypeptide: uncharacterized protein (321 aa).

Residues 280–306 form a disordered region; the sequence is NSDHINNENNTNSNNDDNSNNSNNNNE. Positions 286–306 are enriched in low complexity; sequence NENNTNSNNDDNSNNSNNNNE.

This is an uncharacterized protein from Dictyostelium discoideum (Social amoeba).